The chain runs to 983 residues: Glycine dehydrogenase (decarboxylating) (983 aa).

The residue at position 726 (Lys-726) is an N6-(pyridoxal phosphate)lysine.

This sequence belongs to the GcvP family. The glycine cleavage system is composed of four proteins: P, T, L and H. Requires pyridoxal 5'-phosphate as cofactor.

The catalysed reaction is N(6)-[(R)-lipoyl]-L-lysyl-[glycine-cleavage complex H protein] + glycine + H(+) = N(6)-[(R)-S(8)-aminomethyldihydrolipoyl]-L-lysyl-[glycine-cleavage complex H protein] + CO2. Its function is as follows. The glycine cleavage system catalyzes the degradation of glycine. The P protein binds the alpha-amino group of glycine through its pyridoxal phosphate cofactor; CO(2) is released and the remaining methylamine moiety is then transferred to the lipoamide cofactor of the H protein. This Synechocystis sp. (strain ATCC 27184 / PCC 6803 / Kazusa) protein is Glycine dehydrogenase (decarboxylating).